The sequence spans 561 residues: Long-chain-fatty-acid--CoA ligase (561 aa).

213-224 is an ATP binding site; that stretch reads YTGGTTGVAKGA.

The protein belongs to the ATP-dependent AMP-binding enzyme family. Mg(2+) serves as cofactor.

The protein resides in the membrane. The enzyme catalyses a long-chain fatty acid + ATP + CoA = a long-chain fatty acyl-CoA + AMP + diphosphate. Its pathway is lipid metabolism; fatty acid beta-oxidation. Catalyzes the esterification, concomitant with transport, of exogenous long-chain fatty acids into metabolically active CoA thioesters for subsequent degradation or incorporation into phospholipids. The polypeptide is Long-chain-fatty-acid--CoA ligase (fadD) (Escherichia coli O6:H1 (strain CFT073 / ATCC 700928 / UPEC)).